We begin with the raw amino-acid sequence, 573 residues long: Protein translocase subunit SecD (573 aa).

The chain crosses the membrane as a helical span at residues 13–33 (YLSVFLVMLIGIYLLVFFTGD). The interval 127-200 (AQPAAEEPQP…PPAEAPATDP (74 aa)) is disordered. 2 stretches are compositionally biased toward pro residues: residues 135-154 (QPAPSAEPQPPGQPAAPPPA) and 161-194 (SPQPGAQPRPYPQDPAPSPNPTSPASPPPAPPAE). Transmembrane regions (helical) follow at residues 385–405 (AGMIAGAIGLLLVLVYSLLYY), 410–430 (LLTALSLVASGSMVFAILVLL), 441–461 (AGIAGLIIGIGTTADSFVVFF), 489–509 (IVSGNAVTFLAAAVLYFLAIG), and 514–534 (FAFTLGLTTILDLVVVFLVTW).

It belongs to the SecD/SecF family. SecD subfamily. As to quaternary structure, forms a complex with SecF. Part of the essential Sec protein translocation apparatus which comprises SecA, SecYEG and auxiliary proteins SecDF. Other proteins may also be involved.

Its subcellular location is the cell membrane. Its function is as follows. Part of the Sec protein translocase complex. Interacts with the SecYEG preprotein conducting channel. SecDF uses the proton motive force (PMF) to complete protein translocation after the ATP-dependent function of SecA. The sequence is that of Protein translocase subunit SecD from Mycobacterium tuberculosis (strain CDC 1551 / Oshkosh).